A 471-amino-acid polypeptide reads, in one-letter code: Casein kinase 1-like protein 9 (471 aa).

The region spanning 9-278 (FKLGRKIGSG…LKRLFRDLFI (270 aa)) is the Protein kinase domain. Residues 15 to 23 (IGSGSFGEL) and Lys-38 each bind ATP. The active-site Proton acceptor is Asp-128. Residues 300–471 (SSSGSSSRTR…RSLELLTLRK (172 aa)) are disordered. Residues 325 to 339 (EKQERIAGKETRENR) are compositionally biased toward basic and acidic residues. The segment covering 385 to 430 (SSRYGSSSRRAIPSSSRPSSAGGPSDSRSSSRLVTSTGGVGTVSNR) has biased composition (low complexity). The segment covering 431–449 (ASTSQRIQAGNESRTSSFS) has biased composition (polar residues). A compositionally biased stretch (basic and acidic residues) spans 454-464 (NTREDPLRRSL).

It belongs to the protein kinase superfamily. CK1 Ser/Thr protein kinase family. Casein kinase I subfamily. Monomer. Post-translationally, autophosphorylated on serine, threonine and tyrosine residues. In terms of tissue distribution, expressed in leaves, stems and flowers.

Its subcellular location is the cytoplasm. It is found in the nucleus. The catalysed reaction is L-seryl-[protein] + ATP = O-phospho-L-seryl-[protein] + ADP + H(+). It catalyses the reaction L-threonyl-[protein] + ATP = O-phospho-L-threonyl-[protein] + ADP + H(+). Its function is as follows. Casein kinases are operationally defined by their preferential utilization of acidic proteins such as caseins as substrates. Can phosphorylate casein on serine and threonine residues, and poly(Glu,Tyr) in vitro. The sequence is that of Casein kinase 1-like protein 9 from Arabidopsis thaliana (Mouse-ear cress).